We begin with the raw amino-acid sequence, 654 residues long: uncharacterized protein (654 aa).

Residues methionine 1–threonine 13 are compositionally biased toward polar residues. Residues methionine 1–arginine 23 are disordered. Residues cysteine 25–cysteine 54 constitute a DNA-binding region (zn(2)-C6 fungal-type). Positions arginine 63–leucine 96 are disordered.

Its subcellular location is the cytoplasm. It localises to the nucleus. This is an uncharacterized protein from Schizosaccharomyces pombe (strain 972 / ATCC 24843) (Fission yeast).